Consider the following 419-residue polypeptide: Probable 3-isopropylmalate dehydratase large subunit (419 aa).

C299, C359, and C362 together coordinate [4Fe-4S] cluster.

The protein belongs to the aconitase/IPM isomerase family. LeuC type 2 subfamily. In terms of assembly, heterodimer of LeuC and LeuD. Requires [4Fe-4S] cluster as cofactor.

It catalyses the reaction (2R,3S)-3-isopropylmalate = (2S)-2-isopropylmalate. Its pathway is amino-acid biosynthesis; L-leucine biosynthesis; L-leucine from 3-methyl-2-oxobutanoate: step 2/4. Catalyzes the isomerization between 2-isopropylmalate and 3-isopropylmalate, via the formation of 2-isopropylmaleate. The sequence is that of Probable 3-isopropylmalate dehydratase large subunit from Methanothermobacter thermautotrophicus (strain ATCC 29096 / DSM 1053 / JCM 10044 / NBRC 100330 / Delta H) (Methanobacterium thermoautotrophicum).